A 92-amino-acid polypeptide reads, in one-letter code: Small ribosomal subunit protein uS15c (92 aa).

The protein belongs to the universal ribosomal protein uS15 family. As to quaternary structure, part of the 30S ribosomal subunit.

It is found in the plastid. The protein localises to the chloroplast. The chain is Small ribosomal subunit protein uS15c (rps15) from Carica papaya (Papaya).